The primary structure comprises 436 residues: MIDRLREALKRFNPCDSCLGRAFGYGLTGLENRERGRAIKLYLGMRAHLEGEEETLELLARSGLEEAAAVLDDPPEPEPCGVCRGVLDKVDEFAEVVACELKDLEFRGFVVGSRWPEEIRKAEKELWETLGVEGEPIKREFNREVGKRVEHLLDVRADPRNPDIEVVFDFRPSLEDPKFEVHVRPIYVRGRYLKLRRGIPQTKWPCPRCRGAGCPNCDFTGKLYTESVEELIGMVLKDAFLAESHKFHAAGREDIDVRMLGNGRPFVMELLYPKRRNVDLKEIEGEINRKVGDDVQVVGLEYGDPEDVGKVKDLSERSRKRYRAWVKFGKPVPEDKLREVLKGLERSVIEQRTPRRVLHRRADKVRRKRVHEAKLIEYDGDRAVIEFLCDPGLYVKELISGDAGRTRPSLAELVEVEAECERLDVIEFLDEGGDRS.

Asp-254 serves as the catalytic Nucleophile. Tyr-322 and Tyr-394 together coordinate substrate.

Belongs to the pseudouridine synthase Pus10 family.

It carries out the reaction uridine(54) in tRNA = pseudouridine(54) in tRNA. The catalysed reaction is uridine(55) in tRNA = pseudouridine(55) in tRNA. Functionally, responsible for synthesis of pseudouridine from uracil-54 and uracil-55 in the psi GC loop of transfer RNAs. This chain is tRNA pseudouridine synthase Pus10, found in Methanopyrus kandleri (strain AV19 / DSM 6324 / JCM 9639 / NBRC 100938).